The sequence spans 250 residues: UPF0259 membrane protein bbp_256 (250 aa).

A run of 6 helical transmembrane segments spans residues 21-41, 86-106, 125-145, 146-166, 188-208, and 216-236; these read PIIV…DSII, FSLL…IQMT, FFKL…GFLL, YFIP…ILLI, IIVP…LIIS, and FLAY…LIIY.

This sequence belongs to the UPF0259 family.

It localises to the cell membrane. This chain is UPF0259 membrane protein bbp_256, found in Buchnera aphidicola subsp. Baizongia pistaciae (strain Bp).